The following is a 632-amino-acid chain: Probable potassium transport system protein Kup (632 aa).

The next 12 membrane-spanning stretches (helical) occupy residues 20–40 (LLVA…LYTL), 60–80 (ILSL…VMFI), 111–131 (LMVI…MITP), 146–166 (FDGI…ALFL), 178–198 (LFGP…VHGI), 216–236 (FFIV…LALT), 257–277 (WFAL…AILL), 289–309 (LLAP…ATVI), 347–367 (IYIA…VIGF), 379–399 (VAVT…MLLL), 404–424 (PVLA…FFAA), and 429–449 (IVQG…LMST).

Belongs to the HAK/KUP transporter (TC 2.A.72) family.

It is found in the cell inner membrane. The catalysed reaction is K(+)(in) + H(+)(in) = K(+)(out) + H(+)(out). Its function is as follows. Transport of potassium into the cell. Likely operates as a K(+):H(+) symporter. The sequence is that of Probable potassium transport system protein Kup from Pseudomonas putida (strain W619).